The following is a 514-amino-acid chain: Folylpolyglutamate synthase (514 aa).

82–85 is a binding site for ATP; sequence GKGS. S107, E186, and H214 together coordinate Mg(2+). Residues R339 and D355 each coordinate ATP.

The protein belongs to the folylpolyglutamate synthase family. A monovalent cation serves as cofactor.

Its subcellular location is the mitochondrion inner membrane. The protein localises to the mitochondrion matrix. It is found in the cytoplasm. It carries out the reaction (6S)-5,6,7,8-tetrahydrofolyl-(gamma-L-Glu)(n) + L-glutamate + ATP = (6S)-5,6,7,8-tetrahydrofolyl-(gamma-L-Glu)(n+1) + ADP + phosphate + H(+). Its pathway is cofactor biosynthesis; tetrahydrofolylpolyglutamate biosynthesis. Its function is as follows. Catalyzes conversion of folates to polyglutamate derivatives allowing concentration of folate compounds in the cell and the intracellular retention of these cofactors, which are important substrates for most of the folate-dependent enzymes that are involved in one-carbon transfer reactions involved in purine, pyrimidine and amino acid synthesis. The protein is Folylpolyglutamate synthase (MET7) of Candida albicans (Yeast).